A 324-amino-acid chain; its full sequence is Sperm acrosome membrane-associated protein 6 (324 aa).

An N-terminal signal peptide occupies residues 1-26 (MALLALASAVPSALLALAVFRVPAWA). The CXXC motif signature appears at 27–30 (CLLC). Disulfide bonds link C27–C139, C30–C142, C41–C55, C124–C147, C128–C153, and C170–C226. The Extracellular portion of the chain corresponds to 27–295 (CLLCFTTYSE…RPEALTPSNL (269 aa)). The CXXC motif motif lies at 139–142 (CSGC). An Ig-like domain is found at 150–236 (PLDCPVQDVT…VIKQDQRPLA (87 aa)). The N-linked (GlcNAc...) asparagine glycan is linked to N243. The helical transmembrane segment at 296–316 (FLLAVLGALASASATVLAWMF) threads the bilayer. The Cytoplasmic portion of the chain corresponds to 317–324 (FRWYCSGN).

Belongs to the SPACA6 family. In terms of assembly, forms a complex with IZUMO1 and TMEM81 on spermatocyte cell membrane required for fertilization. Detected at the sperm head, equatorial region, neck and midpiece (at protein level). Expressed in testis.

The protein resides in the cytoplasmic vesicle. Its subcellular location is the secretory vesicle. It is found in the acrosome membrane. Sperm protein required for fusion of sperm with the egg membrane during fertilization. May regulate the expression of sperm surface protein DCST2. The protein is Sperm acrosome membrane-associated protein 6 of Homo sapiens (Human).